A 152-amino-acid chain; its full sequence is Transcriptional regulator MraZ (152 aa).

SpoVT-AbrB domains lie at 5-52 (ATLV…PLPE) and 81-124 (ASEC…DETT).

It belongs to the MraZ family. As to quaternary structure, forms oligomers.

The protein localises to the cytoplasm. Its subcellular location is the nucleoid. Functionally, negatively regulates its own expression and that of the subsequent genes in the proximal part of the division and cell wall (dcw) gene cluster. Acts by binding directly to DNA. May also regulate the expression of genes outside the dcw cluster. The polypeptide is Transcriptional regulator MraZ (Citrobacter koseri (strain ATCC BAA-895 / CDC 4225-83 / SGSC4696)).